A 119-amino-acid chain; its full sequence is MANIKKGDLVQVITGRTQAKGGDRGKQGKVLSVLVERNRVVVEGVNFITKHVRVGQTQRGSKTGGIETVEAPIHISNVALVDPESKKPTRVGFRTEQVEKDGVSKTVRVRYAKKSGKDL.

It belongs to the universal ribosomal protein uL24 family. In terms of assembly, part of the 50S ribosomal subunit.

In terms of biological role, one of two assembly initiator proteins, it binds directly to the 5'-end of the 23S rRNA, where it nucleates assembly of the 50S subunit. Its function is as follows. One of the proteins that surrounds the polypeptide exit tunnel on the outside of the subunit. In Clavibacter michiganensis subsp. michiganensis (strain NCPPB 382), this protein is Large ribosomal subunit protein uL24.